The chain runs to 212 residues: Thymidylate kinase (212 aa).

10–17 (GLEGAGKT) is an ATP binding site.

This sequence belongs to the thymidylate kinase family.

It carries out the reaction dTMP + ATP = dTDP + ADP. Its function is as follows. Phosphorylation of dTMP to form dTDP in both de novo and salvage pathways of dTTP synthesis. The polypeptide is Thymidylate kinase (Baumannia cicadellinicola subsp. Homalodisca coagulata).